The primary structure comprises 573 residues: Developmental and secondary metabolism regulator veA (573 aa).

Positions 1 to 11 are enriched in pro residues; sequence MATLAAPPPPL. 2 disordered regions span residues 1–24 and 39–63; these read MATLAAPPPPLGESGNSNSVSRIT and QPKRARACGQGSKSHTDRRPVDPPP. The Velvet domain occupies 27 to 230; the sequence is GKKITYKLNI…AEQGCRVRIR (204 aa). Positions 41–46 match the Nuclear localization signal motif; it reads KRARAC. 2 positions are modified to phosphothreonine: T167 and T170. A Phosphoserine modification is found at S183. Disordered stretches follow at residues 236-295, 307-367, and 384-573; these read RRRG…RRPS, YQRP…SYQS, and SHIP…ATMR. The span at 241 to 260 shows a compositional bias: basic and acidic residues; the sequence is KRTEDYDYDNERGYNNRRPD. Phosphotyrosine is present on Y254. Composition is skewed to pro residues over residues 318–339 and 347–361; these read SSTPIPAPIPMPGPVALPPSTP and PAPPSVPLAAPPPLH. The segment covering 387 to 412 has biased composition (low complexity); the sequence is PQQTTTPTHPYSPRSSISHSRNQSIS. Polar residues predominate over residues 452–493; it reads PSVNSRSKTPSNMITSLPPIQSLSELPSTTSQPSSAIGSSPA. The tract at residues 459–498 is PEST; sequence KTPSNMITSLPPIQSLSELPSTTSQPSSAIGSSPANEPGP. Basic and acidic residues predominate over residues 510–522; sequence RTYEESFGHDDRP.

It belongs to the velvet family. VeA subfamily. As to quaternary structure, component of the heterotrimeric velvet complex composed of laeA, veA and velB; VeA acting as a bridging protein between laeA and velB. Interacts with the light-sensing phytochrome fphA. Interacts with llmF. Post-translationally, phosphorylated at Thr-167, Thr-170, Ser-183 and Tyr-254. Thr-167 should be phosphorylated and T170 and S183 should be dephosphorylated to achieve light induction of conidiation. Phosphorylation of Ser-183 and Tyr-254 influence sterigmatocystin production in a light-independent manner. Phosphorylation of Thr-167 and Thr-170 modulates expression of veA.

The protein localises to the nucleus. The protein resides in the cytoplasm. Functionally, component of the velvet transcription factor complex that controls sexual/asexual developmental ratio in response to light, promoting sexual development in the darkness while stimulating asexual sporulation under illumination. The velvet complex acts as a global regulator for secondary metabolite gene expression. Controls the expression of the sterigmatocystin and penicillin gene clusters. Represses the cryptic ors gene cluster producing orsellinic acid and its F9775 derivatives in a laeA-independent manner. Required for full induction of faoA gene expression by fructosyl amines. Positively regulates the expression of the early sexual development gene esdC. Controls the expression of mannoprotein mnpA. The polypeptide is Developmental and secondary metabolism regulator veA (Emericella nidulans (strain FGSC A4 / ATCC 38163 / CBS 112.46 / NRRL 194 / M139) (Aspergillus nidulans)).